The following is a 324-amino-acid chain: Aspartate carbamoyltransferase catalytic subunit (324 aa).

Arg71 and Thr72 together coordinate carbamoyl phosphate. L-aspartate is bound at residue Lys99. Carbamoyl phosphate contacts are provided by Arg121, His151, and Gln154. L-aspartate-binding residues include Arg184 and Arg239. Positions 280 and 281 each coordinate carbamoyl phosphate.

This sequence belongs to the aspartate/ornithine carbamoyltransferase superfamily. ATCase family. Heterododecamer (2C3:3R2) of six catalytic PyrB chains organized as two trimers (C3), and six regulatory PyrI chains organized as three dimers (R2).

It carries out the reaction carbamoyl phosphate + L-aspartate = N-carbamoyl-L-aspartate + phosphate + H(+). It participates in pyrimidine metabolism; UMP biosynthesis via de novo pathway; (S)-dihydroorotate from bicarbonate: step 2/3. Catalyzes the condensation of carbamoyl phosphate and aspartate to form carbamoyl aspartate and inorganic phosphate, the committed step in the de novo pyrimidine nucleotide biosynthesis pathway. This chain is Aspartate carbamoyltransferase catalytic subunit, found in Cupriavidus necator (strain ATCC 17699 / DSM 428 / KCTC 22496 / NCIMB 10442 / H16 / Stanier 337) (Ralstonia eutropha).